A 138-amino-acid chain; its full sequence is Cysteine desulfuration protein SufE (138 aa).

The active-site Cysteine persulfide intermediate is the C51.

It belongs to the SufE family. Homodimer. Interacts with SufS.

The protein localises to the cytoplasm. It functions in the pathway cofactor biosynthesis; iron-sulfur cluster biosynthesis. Functionally, participates in cysteine desulfuration mediated by SufS. Cysteine desulfuration mobilizes sulfur from L-cysteine to yield L-alanine and constitutes an essential step in sulfur metabolism for biosynthesis of a variety of sulfur-containing biomolecules. Functions as a sulfur acceptor for SufS, by mediating the direct transfer of the sulfur atom from the S-sulfanylcysteine of SufS, an intermediate product of cysteine desulfuration process. The protein is Cysteine desulfuration protein SufE of Escherichia coli O6:K15:H31 (strain 536 / UPEC).